The chain runs to 488 residues: Ribulose bisphosphate carboxylase large chain 1 (488 aa).

N127 and T177 together coordinate substrate. K179 acts as the Proton acceptor in catalysis. K181 is a substrate binding site. Residues K205, D207, and E208 each coordinate Mg(2+). K205 carries the N6-carboxylysine modification. H297 serves as the catalytic Proton acceptor. Residues R298, H330, and S382 each coordinate substrate.

Belongs to the RuBisCO large chain family. Type I subfamily. As to quaternary structure, heterohexadecamer of 8 large chains and 8 small chains. Requires Mg(2+) as cofactor.

The enzyme catalyses 2 (2R)-3-phosphoglycerate + 2 H(+) = D-ribulose 1,5-bisphosphate + CO2 + H2O. It carries out the reaction D-ribulose 1,5-bisphosphate + O2 = 2-phosphoglycolate + (2R)-3-phosphoglycerate + 2 H(+). Its function is as follows. RuBisCO catalyzes two reactions: the carboxylation of D-ribulose 1,5-bisphosphate, the primary event in carbon dioxide fixation, as well as the oxidative fragmentation of the pentose substrate. Both reactions occur simultaneously and in competition at the same active site. The polypeptide is Ribulose bisphosphate carboxylase large chain 1 (Bradyrhizobium sp. (strain BTAi1 / ATCC BAA-1182)).